Reading from the N-terminus, the 1027-residue chain is Contactin-5 (1027 aa).

Residues 1–19 (MMWLSWKLFLFLSLIGCLS) form the signal peptide. 6 consecutive Ig-like C2-type domains span residues 32–117 (PDDV…AVLQ), 123–209 (NFSG…RVLS), 227–307 (PKIE…RNVF), 317–401 (PQWV…AELK), 407–494 (PTFP…ASVS), and 498–593 (PTRI…TELL). Cysteine 50 and cysteine 100 are disulfide-bonded. N-linked (GlcNAc...) asparagine glycans are attached at residues asparagine 65 and asparagine 123. 2 disulfides stabilise this stretch: cysteine 144/cysteine 196 and cysteine 249/cysteine 296. 3 N-linked (GlcNAc...) asparagine glycosylation sites follow: asparagine 324, asparagine 376, and asparagine 467. Disulfide bonds link cysteine 338/cysteine 385, cysteine 430/cysteine 478, and cysteine 520/cysteine 577. Fibronectin type-III domains lie at 600-698 (PPGV…TNEA), 703-800 (PPAN…SAEG), 805-899 (APID…TKKS), and 901-994 (PSQA…SYAG). 4 N-linked (GlcNAc...) asparagine glycosylation sites follow: asparagine 706, asparagine 743, asparagine 858, and asparagine 929. Serine 999 is lipidated: GPI-anchor amidated serine. Residues 1000–1027 (AQSTLHMFSTSSSSVTLLLVLMVPSTSW) constitute a propeptide, removed in mature form.

Belongs to the immunoglobulin superfamily. Contactin family. Interacts with INgCAM/L1 and the tenascin-R TNP protein. Does not interacts with NrCAM. Expressed by subpopulations of Purkinje cells in the cerebellum. Also expressed by one type of Purkinje cell afferents, the climbing fibers.

The protein resides in the cell membrane. Its function is as follows. Contactins mediate cell surface interactions during nervous system development. May contribute to the formation of somatotopic maps of cerebellar afferents during the development of the nervous system. The protein is Contactin-5 (CNTN5) of Gallus gallus (Chicken).